A 310-amino-acid polypeptide reads, in one-letter code: Oxygen-dependent coproporphyrinogen-III oxidase (310 aa).

Serine 97 contributes to the substrate binding site. Histidine 101 and histidine 111 together coordinate a divalent metal cation. Histidine 111 functions as the Proton donor in the catalytic mechanism. 113–115 (NFR) contacts substrate. Histidine 150 and histidine 180 together coordinate a divalent metal cation. Positions 245–280 (YVEFNLLYDRGTRFGLEFGGRTESILMSLPPRVVWR) are important for dimerization. 263-265 (GGR) lines the substrate pocket.

This sequence belongs to the aerobic coproporphyrinogen-III oxidase family. Homodimer. A divalent metal cation is required as a cofactor.

It localises to the cytoplasm. It carries out the reaction coproporphyrinogen III + O2 + 2 H(+) = protoporphyrinogen IX + 2 CO2 + 2 H2O. The protein operates within porphyrin-containing compound metabolism; protoporphyrin-IX biosynthesis; protoporphyrinogen-IX from coproporphyrinogen-III (O2 route): step 1/1. Involved in the heme biosynthesis. Catalyzes the aerobic oxidative decarboxylation of propionate groups of rings A and B of coproporphyrinogen-III to yield the vinyl groups in protoporphyrinogen-IX. The polypeptide is Oxygen-dependent coproporphyrinogen-III oxidase (Coxiella burnetii (strain Dugway 5J108-111)).